The following is an 82-amino-acid chain: Omega-conotoxin-like 9 (82 aa).

The signal sequence occupies residues 1–22; sequence MKLTCMMIAAVLFLTTWTFVTA. A propeptide spanning residues 23-51 is cleaved from the precursor; sequence DDSRYGLKNLFPKARHEMKNPEASKLNKR. Cystine bridges form between Cys54/Cys69, Cys61/Cys73, and Cys68/Cys77.

It belongs to the conotoxin O1 superfamily. As to expression, expressed by the venom duct.

It is found in the secreted. In terms of biological role, omega-conotoxins act at presynaptic membranes, they bind and block voltage-gated calcium channels (Cav). The chain is Omega-conotoxin-like 9 from Conus striatus (Striated cone).